The sequence spans 275 residues: MNTKEIVNKYEFKFNKNLGQNFLIDESVLEDIIEGAEISKEDTVIEIGPGVGTLTKELLERAKEVYSIELDGDLIPILQEELKEYNNFTLIHKDALKINFNELMENKDSIKLVANLPYYVTTPIISRLLTEKCDFKSLTIMIQKEVAERINAEPNCKEYGSLTVLVQYYCNTKIIRKVSPNSFIPKPKVDSIVIKLDRLSEPRVRVKSQKLFFNVVRSSFNMRRKTLWNSLKSLNIDKESMENAFERAGIDPKRRGETLSIEEFGKLSDCIYDIL.

Asn-21, Leu-23, Gly-48, Glu-69, Asp-94, and Asn-115 together coordinate S-adenosyl-L-methionine.

The protein belongs to the class I-like SAM-binding methyltransferase superfamily. rRNA adenine N(6)-methyltransferase family. RsmA subfamily.

It is found in the cytoplasm. It carries out the reaction adenosine(1518)/adenosine(1519) in 16S rRNA + 4 S-adenosyl-L-methionine = N(6)-dimethyladenosine(1518)/N(6)-dimethyladenosine(1519) in 16S rRNA + 4 S-adenosyl-L-homocysteine + 4 H(+). In terms of biological role, specifically dimethylates two adjacent adenosines (A1518 and A1519) in the loop of a conserved hairpin near the 3'-end of 16S rRNA in the 30S particle. May play a critical role in biogenesis of 30S subunits. This is Ribosomal RNA small subunit methyltransferase A from Clostridium botulinum (strain Okra / Type B1).